Consider the following 400-residue polypeptide: WD repeat and FYVE domain-containing protein 2 (400 aa).

WD repeat units follow at residues 22 to 61 (GSQEVVNMAVIVPKEEGVISVSEDRTVRVWLKRDSGQYWP), 66 to 105 (AMPSPCSCMSFNPETRRLSIGLDNGTISEFILSEDYNKMT), 112 to 150 (AHQSRVTMILFVLELEWVLSTGQDKQFAWHCSESGQRLG), 153 to 192 (RTSAVASGLQFDVETRHVFIGDHSGQVTILKLEQENCTLV), 197 to 236 (GHTGGVTALCWDPVQRVLFSGSSDHSVIMWDIGGRKGTAI), and 240 to 279 (GHNDRVQALSYAQHTRQLISCGGDGGIVVWNMDVERQETP). An FYVE-type zinc finger spans residues 281–352 (WLDSDSCQKC…VCDSCHEAIT (72 aa)). Zn(2+) contacts are provided by C287, C290, C314, C317, C322, C325, C344, and C347. Residues 364–399 (DSKHNIVHVHFDATRGWLLTSGTDKVIKLWDMTPVV) form a WD 7 repeat.

In terms of assembly, homodimer. Interacts (via WD repeats 1-3) with AKT1, AKT2, PRKCZ and PRKCI. Interacts with VAMP2. Forms a complex with VAMP2 and PRKCZ. Interacts with FOXO1. Forms a complex with AKT1 and FOXO1.

It is found in the endosome. The protein localises to the early endosome. It localises to the cytoplasm. In terms of biological role, acts in an adapter protein-like fashion to mediate the interaction between the kinase PRKCZ and its substrate VAMP2 and increases the PRKCZ-dependent phosphorylation of VAMP2. Positively regulates adipocyte differentiation, by facilitating the phosphorylation and thus inactivation of the anti-adipogenetic transcription factor FOXO1 by the kinase AKT1. Plays a role in endosomal control of AKT2 signaling; required for insulin-stimulated AKT2 phosphorylation and glucose uptake and insulin-stimulated phosphorylation of AKT2 substrates. Participates in transferrin receptor endocytosis. In Homo sapiens (Human), this protein is WD repeat and FYVE domain-containing protein 2 (WDFY2).